The sequence spans 101 residues: Movement protein (101 aa).

A helical membrane pass occupies residues 30-50; that stretch reads EVAILSFVALICFYLLYLWVL. A disordered region spans residues 75 to 101; it reads VDRSNPIPNIPAPPSQGNPGPFVPGTG.

Belongs to the mastrevirus movement protein family. In terms of assembly, interacts with the capsid protein (CP). Part of a MP-CP-viral DNA complex.

The protein resides in the host membrane. In terms of biological role, involved in the viral transport within, and between cells. The chain is Movement protein from Maize streak virus genotype A (isolate Kenya) (MSV).